The sequence spans 128 residues: Nucleoside diphosphate kinase B (128 aa).

M1 is modified (N-acetylmethionine). Residues K9, F39, T70, R81, and N91 each coordinate ATP. Residue H94 is the Pros-phosphohistidine intermediate of the active site.

This sequence belongs to the NDK family. Mg(2+) is required as a cofactor.

The protein resides in the cytoplasm. Its subcellular location is the nucleus. The protein localises to the cell projection. It is found in the lamellipodium. It localises to the ruffle. It carries out the reaction a 2'-deoxyribonucleoside 5'-diphosphate + ATP = a 2'-deoxyribonucleoside 5'-triphosphate + ADP. It catalyses the reaction a ribonucleoside 5'-diphosphate + ATP = a ribonucleoside 5'-triphosphate + ADP. In terms of biological role, major role in the synthesis of nucleoside triphosphates other than ATP. This chain is Nucleoside diphosphate kinase B (nme2), found in Merluccius bilinearis (Silver hake).